A 324-amino-acid polypeptide reads, in one-letter code: [Acyl-carrier-protein] phosphodiesterase PptH (324 aa).

Residues D22, H24, and D51 each contribute to the Mn(2+) site. Fe cation-binding residues include D51, N79, H205, and H246. H248 provides a ligand contact to Mn(2+).

The protein belongs to the metallophosphoesterase superfamily. Requires Fe(3+) as cofactor. Mn(2+) serves as cofactor.

It carries out the reaction holo-[ACP] + H2O = apo-[ACP] + (R)-4'-phosphopantetheine + H(+). Catalyzes the hydrolysis of the phosphopantetheine group from substrate holo-carrier proteins. The protein is [Acyl-carrier-protein] phosphodiesterase PptH of Mycobacterium tuberculosis (strain ATCC 25618 / H37Rv).